A 369-amino-acid polypeptide reads, in one-letter code: Large ribosomal subunit protein uL4 (369 aa).

An N-acetylthreonine modification is found at threonine 2.

Belongs to the universal ribosomal protein uL4 family.

This chain is Large ribosomal subunit protein uL4 (rpl4), found in Dictyostelium discoideum (Social amoeba).